Consider the following 358-residue polypeptide: Stearoyl-CoA desaturase 2 (358 aa).

At 1–71 (MPAHILQEIS…EGPPPKLEYV (71 aa)) the chain is on the cytoplasmic side. Positions 16–39 (TTTITAPPSGGQQNGGEKFEKSSH) are disordered. The helical transmembrane segment at 72–92 (WRNIILMALLHLGALYGITLV) threads the bilayer. Asparagine 74 contacts substrate. At 93-96 (PSCK) the chain is on the lumenal side. A helical transmembrane segment spans residues 97–117 (LYTCLFAYLYYVISALGITAG). Residues 118 to 216 (AHRLWSHRTY…EKLVMFQRRY (99 aa)) lie on the Cytoplasmic side of the membrane. The Fe cation site is built by histidine 119 and histidine 124. The short motif at 119–124 (HRLWSH) is the Histidine box-1 element. The substrate site is built by asparagine 147, arginine 154, and aspartate 155. Fe cation contacts are provided by histidine 156, histidine 159, and histidine 160. Residues 156 to 160 (HRAHH) carry the Histidine box-2 motif. Substrate contacts are provided by arginine 187 and lysine 188. Residues 217 to 236 (YKPGLLLMCFVLPTLVPWYC) traverse the membrane as a helical segment. Residues 237–240 (WGET) are Lumenal-facing. The chain crosses the membrane as a helical span at residues 241 to 262 (FVNSLCVSTFLRYAVVLNATWL). Tryptophan 261 serves as a coordination point for substrate. Residues 263–358 (VNSAAHLYGY…RTGDGSCKSG (96 aa)) are Cytoplasmic-facing. Residues histidine 268, histidine 297, histidine 300, and histidine 301 each coordinate Fe cation. Positions 297-301 (HNYHH) match the Histidine box-3 motif.

Belongs to the fatty acid desaturase type 1 family. The cofactor is Fe(2+). As to expression, detected in brain and skin. Highly expressed in brain, and detected at low levels in heart, stomach, lung and testis. Detected both in dermis and epidermis.

The protein localises to the endoplasmic reticulum membrane. It localises to the microsome membrane. It carries out the reaction octadecanoyl-CoA + 2 Fe(II)-[cytochrome b5] + O2 + 2 H(+) = (9Z)-octadecenoyl-CoA + 2 Fe(III)-[cytochrome b5] + 2 H2O. It catalyses the reaction hexadecanoyl-CoA + 2 Fe(II)-[cytochrome b5] + O2 + 2 H(+) = (9Z)-hexadecenoyl-CoA + 2 Fe(III)-[cytochrome b5] + 2 H2O. Stearoyl-CoA desaturase that utilizes O(2) and electrons from reduced cytochrome b5 to introduce the first double bond into saturated fatty acyl-CoA substrates. Catalyzes the insertion of a cis double bond at the delta-9 position into fatty acyl-CoA substrates including palmitoyl-CoA and stearoyl-CoA. Gives rise to a mixture of 16:1 and 18:1 unsaturated fatty acids. Contributes to the biosynthesis of membrane phospholipids, cholesterol esters and triglycerides, especially during embryonic development and in neonates. Important for normal permeability barrier function of the skin in neonates. The chain is Stearoyl-CoA desaturase 2 (Scd2) from Mus musculus (Mouse).